A 488-amino-acid polypeptide reads, in one-letter code: Probable cytochrome P450 6u1 (488 aa).

C430 lines the heme pocket.

The protein belongs to the cytochrome P450 family. It depends on heme as a cofactor.

Its subcellular location is the endoplasmic reticulum membrane. It localises to the microsome membrane. In terms of biological role, may be involved in the metabolism of insect hormones and in the breakdown of synthetic insecticides. The sequence is that of Probable cytochrome P450 6u1 (Cyp6u1) from Drosophila melanogaster (Fruit fly).